The primary structure comprises 559 residues: O-fucosyltransferase 37 (559 aa).

Residues 53–73 (FFLLLISLSLVFSGISFLTFS) traverse the membrane as a helical; Signal-anchor for type II membrane protein segment. Asn126 carries N-linked (GlcNAc...) asparagine glycosylation. 331–333 (HLR) provides a ligand contact to substrate. Residues Asn372, Asn403, Asn447, and Asn504 are each glycosylated (N-linked (GlcNAc...) asparagine).

It belongs to the glycosyltransferase GT106 family.

It is found in the membrane. It participates in glycan metabolism. The chain is O-fucosyltransferase 37 from Arabidopsis thaliana (Mouse-ear cress).